The chain runs to 62 residues: UPF0370 protein ESA_00777 (62 aa).

The helical transmembrane segment at 4-24 (LGKYWWVLVLVFLLGVLLNVI) threads the bilayer. Residues 36-51 (MDNRPELPPHRDFNDK) show a composition bias toward basic and acidic residues. The disordered stretch occupies residues 36-62 (MDNRPELPPHRDFNDKWDDEDDWPKKK). Residues 52–62 (WDDEDDWPKKK) show a composition bias toward acidic residues.

It belongs to the UPF0370 family.

Its subcellular location is the cell membrane. This is UPF0370 protein ESA_00777 from Cronobacter sakazakii (strain ATCC BAA-894) (Enterobacter sakazakii).